The following is a 319-amino-acid chain: Acetyl esterase (319 aa).

Residues 91–93 (HGG) carry the Involved in the stabilization of the negatively charged intermediate by the formation of the oxyanion hole motif. Active-site residues include S165, D262, and H292.

Belongs to the 'GDXG' lipolytic enzyme family. In terms of assembly, homodimer. Interacts with MalT and MelA.

The protein localises to the cytoplasm. Displays esterase activity towards short chain fatty esters (acyl chain length of up to 8 carbons). Able to hydrolyze triacetylglycerol (triacetin) and tributyrylglycerol (tributyrin), but not trioleylglycerol (triolein) or cholesterol oleate. Negatively regulates MalT activity by antagonizing maltotriose binding. Inhibits MelA galactosidase activity. This chain is Acetyl esterase, found in Escherichia coli O17:K52:H18 (strain UMN026 / ExPEC).